The chain runs to 201 residues: uncharacterized protein (201 aa).

Residues 15 to 122 (KNQIQFSTFN…EVLPQIRKTG (108 aa)) form the Bro-N domain.

This is an uncharacterized protein from Haemophilus influenzae (strain ATCC 51907 / DSM 11121 / KW20 / Rd).